A 666-amino-acid polypeptide reads, in one-letter code: Adenylylsulfate reductase subunit alpha (666 aa).

FAD-binding positions include 32 to 35 (GGMG), 60 to 61 (DK), 67 to 69 (SGA), asparagine 78, isoleucine 193, serine 259, serine 417, 461 to 462 (AD), and serine 472.

The protein belongs to the FAD-dependent oxidoreductase 2 family. Heterodimer composed of AprA and AprB. The heterodimers can dimerize to form heterotetramers. FAD is required as a cofactor.

The protein resides in the cytoplasm. The catalysed reaction is sulfite + A + AMP + 2 H(+) = adenosine 5'-phosphosulfate + AH2. Functionally, catalytic subunit of the adenylylsulfate reductase which catalyzes reversibly the reduction of adenosine 5'-phosphosulfate (APS) to sulfite and AMP during dissimilatory sulfate reduction. In Megalodesulfovibrio gigas (strain ATCC 19364 / DSM 1382 / NCIMB 9332 / VKM B-1759) (Desulfovibrio gigas), this protein is Adenylylsulfate reductase subunit alpha.